Consider the following 179-residue polypeptide: Pyridoxal 5'-phosphate synthase subunit PdxT (179 aa).

L-glutamine is bound at residue 48–50 (GES). The Nucleophile role is filled by cysteine 79. Residues arginine 101 and 127 to 128 (IR) each bind L-glutamine. Active-site charge relay system residues include histidine 163 and glutamate 165.

Belongs to the glutaminase PdxT/SNO family. As to quaternary structure, in the presence of PdxS, forms a dodecamer of heterodimers. Only shows activity in the heterodimer.

The enzyme catalyses aldehydo-D-ribose 5-phosphate + D-glyceraldehyde 3-phosphate + L-glutamine = pyridoxal 5'-phosphate + L-glutamate + phosphate + 3 H2O + H(+). It catalyses the reaction L-glutamine + H2O = L-glutamate + NH4(+). It participates in cofactor biosynthesis; pyridoxal 5'-phosphate biosynthesis. In terms of biological role, catalyzes the hydrolysis of glutamine to glutamate and ammonia as part of the biosynthesis of pyridoxal 5'-phosphate. The resulting ammonia molecule is channeled to the active site of PdxS. The chain is Pyridoxal 5'-phosphate synthase subunit PdxT from Francisella tularensis subsp. tularensis (strain FSC 198).